We begin with the raw amino-acid sequence, 169 residues long: Disulfide bond formation protein B (169 aa).

The Cytoplasmic segment spans residues 1–13 (MSQLQQFCHNRFS). The helical transmembrane segment at 14–30 (WGLLLLSAIGLELAALF) threads the bilayer. The Periplasmic segment spans residues 31-48 (FQYGMDLAPCVMCIYIRV). Cys40 and Cys43 form a disulfide bridge. Residues 49 to 64 (AVLGIILAALIGILQP) form a helical membrane-spanning segment. Residues 65–71 (KVWLLRL) are Cytoplasmic-facing. A helical transmembrane segment spans residues 72–89 (VGMAGWAVSAVWGFKLAY). Residues 90 to 144 (ELNQMQVNPSPFATCSFYPEFPSFMPLDTWLPSVFSPTGMCSDSPWSWLSVSMAQ) are Periplasmic-facing. Cys104 and Cys130 are joined by a disulfide. The chain crosses the membrane as a helical span at residues 145-163 (WMMLGFAIYGVIWLLMLLP). Residues 164-169 (ALKSAK) are Cytoplasmic-facing.

This sequence belongs to the DsbB family.

It is found in the cell inner membrane. Functionally, required for disulfide bond formation in some periplasmic proteins. Acts by oxidizing the DsbA protein. The sequence is that of Disulfide bond formation protein B from Shewanella frigidimarina (strain NCIMB 400).